The chain runs to 165 residues: Lipoprotein signal peptidase (165 aa).

3 consecutive transmembrane segments (helical) span residues 12-32, 70-90, and 102-122; these read WLWLVVVVLIVDLGSKALILQ, WFFAGIAIGICVLLVVMMYRA, and ALIIGGALGNLFDRLWHGFVV. Catalysis depends on residues Asp-123 and Asp-141. Residues 137-157 traverse the membrane as a helical segment; that stretch reads FNLADTAICIGAALVVLEGFL.

This sequence belongs to the peptidase A8 family.

It localises to the cell inner membrane. The enzyme catalyses Release of signal peptides from bacterial membrane prolipoproteins. Hydrolyzes -Xaa-Yaa-Zaa-|-(S,diacylglyceryl)Cys-, in which Xaa is hydrophobic (preferably Leu), and Yaa (Ala or Ser) and Zaa (Gly or Ala) have small, neutral side chains.. It functions in the pathway protein modification; lipoprotein biosynthesis (signal peptide cleavage). This protein specifically catalyzes the removal of signal peptides from prolipoproteins. The sequence is that of Lipoprotein signal peptidase from Cronobacter sakazakii (strain ATCC BAA-894) (Enterobacter sakazakii).